A 153-amino-acid polypeptide reads, in one-letter code: MKTFSQKPAEVTKKWVLIDAEGLVVGRLATIVANRLRGKHKPTFTPHVDDGDNVIIINADKVVFTGKKYQDKTYYWHTGYAGGIKERTARQILEGRFPERVVEKAVERMIPRGPLGRRQMKNLRVYAGSEHPHSAQNPEKVDIAALNKKNARG.

It belongs to the universal ribosomal protein uL13 family. In terms of assembly, part of the 50S ribosomal subunit.

Functionally, this protein is one of the early assembly proteins of the 50S ribosomal subunit, although it is not seen to bind rRNA by itself. It is important during the early stages of 50S assembly. The sequence is that of Large ribosomal subunit protein uL13 from Chelativorans sp. (strain BNC1).